A 667-amino-acid polypeptide reads, in one-letter code: Cysteine-rich receptor-like protein kinase 11 (667 aa).

The N-terminal stretch at 1-24 (MKQRSLFSVLCFFFISFGVASVSA) is a signal peptide. 2 consecutive Gnk2-homologous domains span residues 25–129 (QTCT…NTSF) and 135–248 (LNPR…LYTY). The Extracellular portion of the chain corresponds to 25-292 (QTCTTDKGTF…SKGISAGVVV (268 aa)). N-linked (GlcNAc...) asparagine glycans are attached at residues Asn-37, Asn-54, Asn-64, Asn-106, Asn-126, Asn-150, and Asn-254. The segment covering 259-268 (SPPPEPPVTV) has biased composition (pro residues). Residues 259 to 282 (SPPPEPPVTVPQPAGDQDNPTNND) form a disordered region. The N-linked (GlcNAc...) asparagine glycan is linked to Asn-281. Residues 293-313 (AITVPTVIAILILLVLGFVLF) form a helical membrane-spanning segment. Over 314–667 (RRRKSYQRTK…YTSKSSSFSS (354 aa)) the chain is Cytoplasmic. A Protein kinase domain is found at 350-629 (FSTSNKLGEG…IILMLTSNTI (280 aa)). ATP contacts are provided by residues 356 to 364 (LGEGGFGAV) and Lys-378. Tyr-423 is subject to Phosphotyrosine. Residue Asp-475 is the Proton acceptor of the active site. Ser-479 bears the Phosphoserine mark. Thr-515 carries the phosphothreonine modification. Tyr-523 is subject to Phosphotyrosine.

This sequence belongs to the protein kinase superfamily. Ser/Thr protein kinase family. CRK subfamily. In terms of tissue distribution, detected in root, stem, leaf and flower.

It is found in the membrane. It catalyses the reaction L-seryl-[protein] + ATP = O-phospho-L-seryl-[protein] + ADP + H(+). It carries out the reaction L-threonyl-[protein] + ATP = O-phospho-L-threonyl-[protein] + ADP + H(+). The polypeptide is Cysteine-rich receptor-like protein kinase 11 (CRK11) (Arabidopsis thaliana (Mouse-ear cress)).